Consider the following 396-residue polypeptide: MLITVYCVRRDLSEVTFSLQVSPDFELRNFKVLCEAESRVPVEEIQIIHMERLLIEDHCSLGSYGLKDGDIVVLLQKDNVGPRAPGRAPNQPRVDFSGIAVPGTSSSRPQHPGQQQQRTPAAQRSQGLASGEKVAGLQGLGSPALIRSMLLSNPHDLSLLKERNPPLAEALLSGSLETFSQVLMEQQREKALREQERLRLYTADPLDREAQAKIEEEIRQQNIEENMNIAIEEAPESFGQVTMLYINCKVNGHPLKAFVDSGAQMTIMSQACAERCNIMRLVDRRWAGVAKGVGTQRIIGRVHLAQIQIEGDFLQCSFSILEDQPMDMLLGLDMLRRHQCSIDLKKNVLVIGTTGTQTYFLPEGELPLCSRMVSGQDESSDKEITHSVMDSGRKEH.

The 81-residue stretch at 1–81 (MLITVYCVRR…VVLLQKDNVG (81 aa)) folds into the Ubiquitin-like domain. The disordered stretch occupies residues 82–130 (PRAPGRAPNQPRVDFSGIAVPGTSSSRPQHPGQQQQRTPAAQRSQGLAS). A compositionally biased stretch (polar residues) spans 103-128 (GTSSSRPQHPGQQQQRTPAAQRSQGL). Residue aspartate 260 is part of the active site. The segment at 374 to 396 (SGQDESSDKEITHSVMDSGRKEH) is disordered. Positions 379-396 (SSDKEITHSVMDSGRKEH) are enriched in basic and acidic residues.

The protein belongs to the DDI1 family.

Inhibited by the proteinase inhibitors amprenavir, indinavir, lopinavir, isovaleryl pepstatin, ritonavir and saquinavir. Functionally, probable aspartic protease. Seems to act as a proteasomal shuttle which links the proteasome and replication fork proteins like RTF2. Required, with DDI2, for cellular survival following replication stress. Together or redudantly with DDI2, removes RTF2 from stalled forks to allow cell cycle progression after replication stress and maintains genome integrity. The protein is Protein DDI1 homolog 1 (DDI1) of Homo sapiens (Human).